We begin with the raw amino-acid sequence, 502 residues long: Glutamate--tRNA ligase (502 aa).

The 'HIGH' region signature appears at 9–19; it reads PSPTGFPHVGT. Positions 250-254 match the 'KMSKS' region motif; that stretch reads KLSKR. Lysine 253 lines the ATP pocket.

It belongs to the class-I aminoacyl-tRNA synthetase family. Glutamate--tRNA ligase type 1 subfamily. In terms of assembly, monomer.

Its subcellular location is the cytoplasm. The catalysed reaction is tRNA(Glu) + L-glutamate + ATP = L-glutamyl-tRNA(Glu) + AMP + diphosphate. Its function is as follows. Catalyzes the attachment of glutamate to tRNA(Glu) in a two-step reaction: glutamate is first activated by ATP to form Glu-AMP and then transferred to the acceptor end of tRNA(Glu). The protein is Glutamate--tRNA ligase of Acinetobacter baumannii (strain AYE).